A 187-amino-acid polypeptide reads, in one-letter code: MATTADFKNGLVLKLDNKLQQIVEFQHVKPGKGPAFVRTKLKDVVSGKVVDKTFNAGVKVETATVDRRDMTYLYNDGTDYVVMDDKNYEQIPLSPELMGDGARFLLENMPVQVSFYEDQPLFVELPVSVELKVKHTDPGLQGDRSTGGTKPATLETGAEVQVPLFIETGNVLKIDTRDGSYLSRVNN.

It belongs to the elongation factor P family.

The protein resides in the cytoplasm. It functions in the pathway protein biosynthesis; polypeptide chain elongation. Involved in peptide bond synthesis. Stimulates efficient translation and peptide-bond synthesis on native or reconstituted 70S ribosomes in vitro. Probably functions indirectly by altering the affinity of the ribosome for aminoacyl-tRNA, thus increasing their reactivity as acceptors for peptidyl transferase. This Corynebacterium kroppenstedtii (strain DSM 44385 / JCM 11950 / CIP 105744 / CCUG 35717) protein is Elongation factor P.